The primary structure comprises 173 residues: Ribosome maturation factor RimM (173 aa).

A PRC barrel domain is found at 94 to 166; the sequence is VQEEPYIDII…KIIVELPMGF (73 aa).

The protein belongs to the RimM family. Binds ribosomal protein uS19.

The protein localises to the cytoplasm. Its function is as follows. An accessory protein needed during the final step in the assembly of 30S ribosomal subunit, possibly for assembly of the head region. Essential for efficient processing of 16S rRNA. May be needed both before and after RbfA during the maturation of 16S rRNA. It has affinity for free ribosomal 30S subunits but not for 70S ribosomes. The sequence is that of Ribosome maturation factor RimM from Amoebophilus asiaticus (strain 5a2).